The primary structure comprises 369 residues: Probable dual-specificity RNA methyltransferase RlmN (369 aa).

Residue E98 is the Proton acceptor of the active site. A Radical SAM core domain is found at 106-341 (STSRNTLCIS…VTVRKSRGAD (236 aa)). C113 and C346 are disulfide-bonded. [4Fe-4S] cluster-binding residues include C120, C124, and C127. Residues 171 to 172 (GE), S204, 227 to 229 (SLH), and N303 each bind S-adenosyl-L-methionine. C346 serves as the catalytic S-methylcysteine intermediate.

This sequence belongs to the radical SAM superfamily. RlmN family. Requires [4Fe-4S] cluster as cofactor.

The protein resides in the cytoplasm. It catalyses the reaction adenosine(2503) in 23S rRNA + 2 reduced [2Fe-2S]-[ferredoxin] + 2 S-adenosyl-L-methionine = 2-methyladenosine(2503) in 23S rRNA + 5'-deoxyadenosine + L-methionine + 2 oxidized [2Fe-2S]-[ferredoxin] + S-adenosyl-L-homocysteine. The enzyme catalyses adenosine(37) in tRNA + 2 reduced [2Fe-2S]-[ferredoxin] + 2 S-adenosyl-L-methionine = 2-methyladenosine(37) in tRNA + 5'-deoxyadenosine + L-methionine + 2 oxidized [2Fe-2S]-[ferredoxin] + S-adenosyl-L-homocysteine. Specifically methylates position 2 of adenine 2503 in 23S rRNA and position 2 of adenine 37 in tRNAs. In Chloroherpeton thalassium (strain ATCC 35110 / GB-78), this protein is Probable dual-specificity RNA methyltransferase RlmN.